Consider the following 664-residue polypeptide: Ent-copalyl diphosphate synthase 5 (664 aa).

Lys-101 contacts substrate. The Mg(2+) site is built by Asp-233 and Asp-235. A DXDD motif motif is present at residues 233-236 (DIDD). Substrate is bound at residue Lys-320.

The protein belongs to the terpene synthase family. Tpsc subfamily. Mg(2+) is required as a cofactor. Ubiquitous expression in roots, stems, leaves and flowers.

The protein localises to the plastid. It localises to the chloroplast. It carries out the reaction (2E,6E,10E)-geranylgeranyl diphosphate = ent-copalyl diphosphate. The protein operates within secondary metabolite biosynthesis; terpenoid biosynthesis. Involved in the biosynthesis of ent-kaurene diterpenoids natural products such as oridonin, miltiradiene, eriocalyxin B and nezukol, known to exhibit antitumor, anti-inflammatory and antibacterial activities. Catalyzes the conversion of (2E,6E,10E)-geranylgeranyl diphosphate (GGPP) to ent-copalyl diphosphate (ent-CPP). The protein is Ent-copalyl diphosphate synthase 5 of Isodon rubescens (Rabdosia rubescens).